We begin with the raw amino-acid sequence, 156 residues long: Endoribonuclease YbeY (156 aa).

Positions 122, 126, and 132 each coordinate Zn(2+).

The protein belongs to the endoribonuclease YbeY family. The cofactor is Zn(2+).

The protein resides in the cytoplasm. Functionally, single strand-specific metallo-endoribonuclease involved in late-stage 70S ribosome quality control and in maturation of the 3' terminus of the 16S rRNA. The chain is Endoribonuclease YbeY from Bacillus cytotoxicus (strain DSM 22905 / CIP 110041 / 391-98 / NVH 391-98).